Consider the following 341-residue polypeptide: Major histocompatibility complex class I-related protein 1 (341 aa).

The signal sequence occupies residues 1 to 22; the sequence is MGELMAFLLPLIIVLMVKHSDS. Positions 23 to 109 are alpha-1; it reads RTHSLRYFRL…KRLQRHYNHS (87 aa). The tract at residues 23-201 is antigen-binding cleft; sequence RTHSLRYFRL…EYGKDILQRT (179 aa). At 23–302 the chain is on the extracellular side; sequence RTHSLRYFRL…QESETIPLVM (280 aa). Residues Tyr-29 and Arg-31 each contribute to the 8-(9H-purin-6-yl)-2-oxa-8-azabicyclo[3.3.1]nona-3,6-diene-4,6-dicarbaldehyde site. 5-(2-oxoethylideneamino)-6-(D-ribitylamino)uracil is bound by residues Arg-31, Ser-46, and Lys-65. Residues Arg-31, Ser-46, and Lys-65 each coordinate 5-(2-oxopropylideneamino)-6-(D-ribitylamino)uracil. The 7-hydroxy-6-methyl-8-(1-D-ribityl)lumazine site is built by Arg-31, Ser-46, and Lys-65. Residues Lys-65 and His-80 each coordinate 8-(9H-purin-6-yl)-2-oxa-8-azabicyclo[3.3.1]nona-3,6-diene-4,6-dicarbaldehyde. Lys-65 contributes to the 2-amino-4-oxopteridine-6-carbaldehyde binding site. Lys-65 provides a ligand contact to pyridoxal. Asn-107 is a glycosylation site (N-linked (GlcNAc...) asparagine). The alpha-2 stretch occupies residues 110–201; sequence GSHTYQRMIG…EYGKDILQRT (92 aa). Arg-116 lines the 8-(9H-purin-6-yl)-2-oxa-8-azabicyclo[3.3.1]nona-3,6-diene-4,6-dicarbaldehyde pocket. The 5-(2-oxoethylideneamino)-6-(D-ribitylamino)uracil site is built by Arg-116, Tyr-174, and Gln-175. 5-(2-oxopropylideneamino)-6-(D-ribitylamino)uracil contacts are provided by Arg-116, Tyr-174, and Gln-175. The 7-hydroxy-6-methyl-8-(1-D-ribityl)lumazine site is built by Arg-116, Tyr-174, and Gln-175. Disulfide bonds link Cys-120/Cys-183 and Cys-222/Cys-278. An alpha-3 region spans residues 202 to 293; sequence EPPLVRVNRK…GVHMVLQVPQ (92 aa). An Ig-like C1-type domain is found at 203 to 299; that stretch reads PPLVRVNRKE…QVPQESETIP (97 aa). Residues 294–302 are connecting peptide; the sequence is ESETIPLVM. A helical transmembrane segment spans residues 303–323; the sequence is KAVSGSIVLVIVLAGVGVLVW. The Cytoplasmic portion of the chain corresponds to 324–341; the sequence is RRRPREQNGAIYLPTPDR.

It belongs to the MHC class I family. As to quaternary structure, heterotrimer that consists of MR1, B2M and metabolite antigen. Major classes of metabolite ligands presented by MR1 include riboflavin-related antigens, pyrimidines and ribityl lumazines, nucleobase adducts and folate derivatives. Forms reversible covalent Schiff base complexes with microbial pyrimidine-based metabolite, which serves as a molecular switch triggering complete folding, stable association with B2M and translocation of the ternary complex from endoplasmic reticulum to the plasma membrane. Alternatively, forms non-Schiff base complexes with ribityl lumazines. On antigen-presenting cells, the ternary complex interacts with TCR on MR1-restricted T cells. Interacts with TAPBP and TAPBPL chaperones in the endoplasmic reticulum. TAPBP associated or not with MHC class I peptide loading complex binds ligand-free MR1 or MR1-B2M complex, providing for stable MR1 pools ready for metabolite antigen processing. TAPBPL interacts with MR1 in a ligand-independent way; this interaction may stabilize MR1 pool and facilitate ligand loading and dissociation. Structurally, MR1-B2M heterodimer adopts a topology similar to classical MHC class I molecules, with alpha-1 and alpha-2 domains of MR1 forming the antigen-binding cleft composed of two alpha-helices resting on a floor of 7-stranded anti-parallel beta-pleated sheet. MR1-B2M heterodimer (via alpha-helices) interacts with TCR (via CDR domains). N-glycosylated.

Its subcellular location is the cell membrane. It localises to the endoplasmic reticulum membrane. It is found in the golgi apparatus membrane. The protein resides in the early endosome membrane. The protein localises to the late endosome membrane. Functionally, antigen-presenting molecule specialized in displaying microbial pyrimidine-based metabolites to alpha-beta T cell receptors (TCR) on innate-type mucosal-associated invariant T (MAIT) cells. In complex with B2M preferentially presents riboflavin-derived metabolites to semi-invariant TCRs on MAIT cells, guiding immune surveillance of the microbial metabolome at mucosal epithelial barriers. Signature pyrimidine-based microbial antigens are generated via non-enzymatic condensation of metabolite intermediates of the riboflavin pathway with by-products arising from other metabolic pathways such as glycolysis. Typical potent antigenic metabolites are 5-(2-oxoethylideneamino)-6-D-ribitylaminouracil (5-OE-RU) and 5-(2-oxopropylideneamino)-6-D-ribitylaminouracil (5-OP-RU), products of condensation of 5-amino-6-D-ribityaminouracil (5-A-RU) with glyoxal or methylglyoxal by-products, respectively. May present microbial antigens to various MAIT cell subsets, providing for unique recognition of diverse microbes, including pathogens that do not synthesize riboflavin. Upon antigen recognition, elicits rapid innate-type MAIT cell activation to eliminate pathogenic microbes by directly killing infected cells. During T cell development, drives thymic selection and post-thymic terminal differentiation of MAIT cells in a process dependent on commensal microflora. Acts as an immune sensor of cancer cell metabolome. May present a tumor-specific or -associated metabolite essential for cancer cell survival to a pan-cancer TCR on a non-MAIT CD8-positive T cell clone, triggering T cell-mediated killing of a wide range of cancer cell types. May present tumor-enriched pyridoxal and pyridoxal 5'-phosphate antigens, enabling preferential recognition of cancer cells. Presents nucleobase carbonyl adducts generated during oxidative stress. Captures M3Ade, a nucleobase adduct composed of one adenine modified by a malondialdehyde trimer, for recognition by MR1-restricted T cell clones expressing a polyclonal TCR repertoire. This chain is Major histocompatibility complex class I-related protein 1, found in Pan troglodytes (Chimpanzee).